Reading from the N-terminus, the 38-residue chain is Trypsin inhibitor 2 (38 aa).

Gln-1 is subject to Pyrrolidone carboxylic acid.

Contains disulfide bonds.

Inhibits trypsin-like proteases from the guts of the insect pests P.truncatus, P.americana, Acheta sp and Gryllus sp. In Opuntia streptacantha (Prickly pear cactus), this protein is Trypsin inhibitor 2.